A 238-amino-acid chain; its full sequence is 2-C-methyl-D-erythritol 4-phosphate cytidylyltransferase (238 aa).

This sequence belongs to the IspD/TarI cytidylyltransferase family. IspD subfamily.

The enzyme catalyses 2-C-methyl-D-erythritol 4-phosphate + CTP + H(+) = 4-CDP-2-C-methyl-D-erythritol + diphosphate. Its pathway is isoprenoid biosynthesis; isopentenyl diphosphate biosynthesis via DXP pathway; isopentenyl diphosphate from 1-deoxy-D-xylulose 5-phosphate: step 2/6. Its function is as follows. Catalyzes the formation of 4-diphosphocytidyl-2-C-methyl-D-erythritol from CTP and 2-C-methyl-D-erythritol 4-phosphate (MEP). This is 2-C-methyl-D-erythritol 4-phosphate cytidylyltransferase from Acinetobacter baumannii (strain AYE).